We begin with the raw amino-acid sequence, 1026 residues long: Contactin-4 (1026 aa).

The signal sequence occupies residues 1–18 (MRLPWELLVLQSFILCLA). Ig-like C2-type domains lie at 32-117 (PSPV…AKLQ), 122-207 (DNFK…KVLG), 225-311 (PKIE…GQLT), 316-400 (PNWI…AELS), 406-493 (PDFS…GNLV), and 497-586 (PTRV…DRLS). Intrachain disulfides connect Cys-50–Cys-100, Cys-144–Cys-194, Cys-247–Cys-295, Cys-337–Cys-384, Cys-429–Cys-477, and Cys-519–Cys-576. Residues Asn-65, Asn-90, and Asn-191 are each glycosylated (N-linked (GlcNAc...) asparagine). Asn-370, Asn-375, and Asn-466 each carry an N-linked (GlcNAc...) asparagine glycan. 4 Fibronectin type-III domains span residues 599–697 (PPEA…TEEA), 702–799 (TPAN…SAEE), 804–899 (PPAS…TRKP), and 900–995 (PPSQ…ISNA). The tract at residues 685–710 (PSRPSEKRRTEEALPEVTPANVSGGG) is disordered. The span at 687–696 (RPSEKRRTEE) shows a compositional bias: basic and acidic residues. Asn-705, Asn-764, Asn-858, Asn-893, Asn-911, Asn-929, and Asn-954 each carry an N-linked (GlcNAc...) asparagine glycan. The segment covering 886-896 (GPSSATVNVTT) has biased composition (polar residues). A disordered region spans residues 886 to 907 (GPSSATVNVTTRKPPPSQPPGN). Residue Ser-1000 is the site of GPI-anchor amidated serine attachment. Residues 1001 to 1026 (GASTSNACTLSAISTIMISLTARSSL) constitute a propeptide, removed in mature form.

The protein belongs to the immunoglobulin superfamily. Contactin family. In terms of assembly, interacts with PTPRG. In terms of tissue distribution, mainly expressed in brain. Highly expressed in cerebellum and weakly expressed in corpus callosum, caudate nucleus, amygdala and spinal cord. Also expressed in testis, pancreas, thyroid, uterus, small intestine and kidney. Not expressed in skeletal muscle. Isoform 2 is weakly expressed in cerebral cortex.

It is found in the cell membrane. It localises to the secreted. Functionally, contactins mediate cell surface interactions during nervous system development. Has some neurite outgrowth-promoting activity. May be involved in synaptogenesis. The sequence is that of Contactin-4 (CNTN4) from Homo sapiens (Human).